A 350-amino-acid chain; its full sequence is 4-hydroxy-3-methylbut-2-enyl diphosphate reductase (350 aa).

A [4Fe-4S] cluster-binding site is contributed by cysteine 36. (2E)-4-hydroxy-3-methylbut-2-enyl diphosphate-binding residues include histidine 65 and histidine 101. Residues histidine 65 and histidine 101 each coordinate dimethylallyl diphosphate. Positions 65 and 101 each coordinate isopentenyl diphosphate. Cysteine 123 is a binding site for [4Fe-4S] cluster. Histidine 151 contributes to the (2E)-4-hydroxy-3-methylbut-2-enyl diphosphate binding site. A dimethylallyl diphosphate-binding site is contributed by histidine 151. An isopentenyl diphosphate-binding site is contributed by histidine 151. The active-site Proton donor is glutamate 153. Position 192 (threonine 192) interacts with (2E)-4-hydroxy-3-methylbut-2-enyl diphosphate. Cysteine 222 is a [4Fe-4S] cluster binding site. (2E)-4-hydroxy-3-methylbut-2-enyl diphosphate contacts are provided by serine 250, serine 251, asparagine 252, and serine 295. Dimethylallyl diphosphate is bound by residues serine 250, serine 251, asparagine 252, and serine 295. Positions 250, 251, 252, and 295 each coordinate isopentenyl diphosphate.

The protein belongs to the IspH family. Requires [4Fe-4S] cluster as cofactor.

It carries out the reaction isopentenyl diphosphate + 2 oxidized [2Fe-2S]-[ferredoxin] + H2O = (2E)-4-hydroxy-3-methylbut-2-enyl diphosphate + 2 reduced [2Fe-2S]-[ferredoxin] + 2 H(+). The enzyme catalyses dimethylallyl diphosphate + 2 oxidized [2Fe-2S]-[ferredoxin] + H2O = (2E)-4-hydroxy-3-methylbut-2-enyl diphosphate + 2 reduced [2Fe-2S]-[ferredoxin] + 2 H(+). It participates in isoprenoid biosynthesis; dimethylallyl diphosphate biosynthesis; dimethylallyl diphosphate from (2E)-4-hydroxy-3-methylbutenyl diphosphate: step 1/1. It functions in the pathway isoprenoid biosynthesis; isopentenyl diphosphate biosynthesis via DXP pathway; isopentenyl diphosphate from 1-deoxy-D-xylulose 5-phosphate: step 6/6. Its function is as follows. Catalyzes the conversion of 1-hydroxy-2-methyl-2-(E)-butenyl 4-diphosphate (HMBPP) into a mixture of isopentenyl diphosphate (IPP) and dimethylallyl diphosphate (DMAPP). Acts in the terminal step of the DOXP/MEP pathway for isoprenoid precursor biosynthesis. This is 4-hydroxy-3-methylbut-2-enyl diphosphate reductase from Rhizobium meliloti (strain 1021) (Ensifer meliloti).